Reading from the N-terminus, the 728-residue chain is Catalase-peroxidase 1 (728 aa).

A signal peptide spans methionine 1–alanine 22. Positions tryptophan 97 to tyrosine 225 form a cross-link, tryptophyl-tyrosyl-methioninium (Trp-Tyr) (with M-251). The active-site Proton acceptor is histidine 98. Residues tyrosine 225–methionine 251 constitute a cross-link (tryptophyl-tyrosyl-methioninium (Tyr-Met) (with W-97)). Histidine 266 is a binding site for heme b.

The protein belongs to the peroxidase family. Peroxidase/catalase subfamily. As to quaternary structure, homodimer or homotetramer. It depends on heme b as a cofactor. In terms of processing, formation of the three residue Trp-Tyr-Met cross-link is important for the catalase, but not the peroxidase activity of the enzyme.

It carries out the reaction H2O2 + AH2 = A + 2 H2O. The enzyme catalyses 2 H2O2 = O2 + 2 H2O. Functionally, bifunctional enzyme with both catalase and broad-spectrum peroxidase activity. The protein is Catalase-peroxidase 1 of Shewanella sp. (strain MR-7).